Here is a 769-residue protein sequence, read N- to C-terminus: DNA gyrase subunit B (769 aa).

Positions 414-528 (SEIYLVEGDS…NGHIYLAQPP (115 aa)) constitute a Toprim domain. Mg(2+) is bound by residues Glu-420, Asp-493, and Asp-495.

The protein belongs to the type II topoisomerase GyrB family. In terms of assembly, heterotetramer, composed of two GyrA and two GyrB chains. In the heterotetramer, GyrA contains the active site tyrosine that forms a transient covalent intermediate with DNA, while GyrB binds cofactors and catalyzes ATP hydrolysis. Mg(2+) serves as cofactor. The cofactor is Mn(2+). It depends on Ca(2+) as a cofactor.

The protein localises to the cytoplasm. The catalysed reaction is ATP-dependent breakage, passage and rejoining of double-stranded DNA.. Functionally, a type II topoisomerase that negatively supercoils closed circular double-stranded (ds) DNA in an ATP-dependent manner to modulate DNA topology and maintain chromosomes in an underwound state. Negative supercoiling favors strand separation, and DNA replication, transcription, recombination and repair, all of which involve strand separation. Also able to catalyze the interconversion of other topological isomers of dsDNA rings, including catenanes and knotted rings. Type II topoisomerases break and join 2 DNA strands simultaneously in an ATP-dependent manner. In Campylobacter jejuni subsp. jejuni serotype O:2 (strain ATCC 700819 / NCTC 11168), this protein is DNA gyrase subunit B.